The chain runs to 496 residues: Nucleolar and spindle-associated protein 1-B (496 aa).

Disordered stretches follow at residues 44–206 (YPES…HEAH), 250–294 (TPVS…STAN), and 338–496 (KSSS…VPVK). Positions 56–69 (GCTSLTDTDELNSS) are enriched in polar residues. Positions 121–134 (TQDKDCLESKKKEV) are enriched in basic and acidic residues. Positions 150-159 (QDTSKQNNSE) are enriched in polar residues. A compositionally biased stretch (low complexity) spans 261–281 (SRLSLLSPLPRTTGASPSRTP). Composition is skewed to polar residues over residues 376 to 396 (NTTIQPSPAITESPCQQNKAN) and 403 to 423 (AQNTETPNTNKKGSFDLQASL). The span at 447 to 459 (SGSNSNVSVLKNN) shows a compositional bias: low complexity. Positions 467–485 (TREERRKQHELDRKGKRDQ) are enriched in basic and acidic residues.

It belongs to the NUSAP family. Interacts with DNA, microtubules, ipo7, kpna2 and kpnb1. Microtubule stabilization is inhibited by ipo7 and kpna2, while microtubule bundling is inhibited by kpnb1. Active GTP-bound ran causes dissociation of ipo7 and kpnb1.

It localises to the cytoplasm. The protein localises to the nucleus. Its subcellular location is the cytoskeleton. The protein resides in the spindle. In terms of biological role, microtubule-associated protein with the capacity to bundle and stabilize microtubules. May associate with chromosomes and promote the organization of meiotic or mitotic spindle microtubules around them. The protein is Nucleolar and spindle-associated protein 1-B (nusap1-b) of Xenopus laevis (African clawed frog).